Consider the following 274-residue polypeptide: Light-independent protochlorophyllide reductase iron-sulfur ATP-binding protein (274 aa).

Residues 12-17 and Lys-41 contribute to the ATP site; that span reads GIGKST. Residue Ser-16 participates in Mg(2+) binding. Residues Cys-97 and Cys-131 each contribute to the [4Fe-4S] cluster site.

The protein belongs to the NifH/BchL/ChlL family. As to quaternary structure, homodimer. Protochlorophyllide reductase is composed of three subunits; BchL, BchN and BchB. Requires [4Fe-4S] cluster as cofactor.

It catalyses the reaction chlorophyllide a + oxidized 2[4Fe-4S]-[ferredoxin] + 2 ADP + 2 phosphate = protochlorophyllide a + reduced 2[4Fe-4S]-[ferredoxin] + 2 ATP + 2 H2O. It functions in the pathway porphyrin-containing compound metabolism; bacteriochlorophyll biosynthesis (light-independent). Component of the dark-operative protochlorophyllide reductase (DPOR) that uses Mg-ATP and reduced ferredoxin to reduce ring D of protochlorophyllide (Pchlide) to form chlorophyllide a (Chlide). This reaction is light-independent. The L component serves as a unique electron donor to the NB-component of the complex, and binds Mg-ATP. This chain is Light-independent protochlorophyllide reductase iron-sulfur ATP-binding protein, found in Chloroherpeton thalassium (strain ATCC 35110 / GB-78).